We begin with the raw amino-acid sequence, 306 residues long: HORMA domain-containing protein 2 (306 aa).

In terms of domain architecture, HORMA spans His-29–Val-232.

In terms of assembly, interacts with HORMAD1. Post-translationally, phosphorylated in a SPO11-dependent manner.

Its subcellular location is the nucleus. The protein resides in the chromosome. Essential for synapsis surveillance during meiotic prophase via the recruitment of ATR activity. Plays a key role in the male mid-pachytene checkpoint and the female meiotic prophase checkpoint: required for efficient build-up of ATR activity on unsynapsed chromosome regions, a process believed to form the basis of meiotic silencing of unsynapsed chromatin (MSUC) and meiotic prophase quality control in both sexes. Required for the DNA double-strand break-independent, BRCA1-dependent activation of ATR on the sex chromosomes that is essential for normal sex body formation. In Bos taurus (Bovine), this protein is HORMA domain-containing protein 2 (HORMAD2).